Reading from the N-terminus, the 374-residue chain is Cobalt-precorrin-5B C(1)-methyltransferase (374 aa).

The protein belongs to the CbiD family.

The enzyme catalyses Co-precorrin-5B + S-adenosyl-L-methionine = Co-precorrin-6A + S-adenosyl-L-homocysteine. The protein operates within cofactor biosynthesis; adenosylcobalamin biosynthesis; cob(II)yrinate a,c-diamide from sirohydrochlorin (anaerobic route): step 6/10. Catalyzes the methylation of C-1 in cobalt-precorrin-5B to form cobalt-precorrin-6A. This chain is Cobalt-precorrin-5B C(1)-methyltransferase, found in Synechococcus elongatus (strain ATCC 33912 / PCC 7942 / FACHB-805) (Anacystis nidulans R2).